A 75-amino-acid chain; its full sequence is UPF0729 protein C18orf32 homolog (75 aa).

The necessary for its localzation to the endoplasmic reticulum and lipid droplets stretch occupies residues 1–37; it reads MVCIPCIVIPVLLWVYKRFLEPVLYPIISPIISRFWR. Over residues 43–65 the composition is skewed to polar residues; sequence DTPQQKTSTAECNGAANGSTANG. The interval 43-75 is disordered; it reads DTPQQKTSTAECNGAANGSTANGPKTVADKKAD.

It belongs to the UPF0729 family.

Its subcellular location is the endoplasmic reticulum. It localises to the lipid droplet. This is UPF0729 protein C18orf32 homolog from Danio rerio (Zebrafish).